A 141-amino-acid chain; its full sequence is uncharacterized protein (141 aa).

5 helical membrane-spanning segments follow: residues 7 to 27 (FWAL…KVGV), 34 to 54 (FATL…VAAT), 69 to 89 (LFLA…FRAL), 97 to 117 (VAPL…LFLG), and 121 to 141 (NLMN…LAVF). The 127-residue stretch at 14–140 (AFAALTAVFA…IAAGALLLAV (127 aa)) folds into the EamA domain.

The protein belongs to the EamA transporter family.

The protein localises to the cell membrane. This is an uncharacterized protein from Sinorhizobium sp.